Reading from the N-terminus, the 240-residue chain is Small ribosomal subunit protein uS2 (240 aa).

It belongs to the universal ribosomal protein uS2 family. As to quaternary structure, component of the small ribosomal subunit. Mature ribosomes consist of a small (40S) and a large (60S) subunit. The 40S subunit contains about 33 different proteins and 1 molecule of RNA (18S). The 60S subunit contains about 49 different proteins and 3 molecules of RNA (25S, 5.8S and 5S). Interacts with RPS21.

Its subcellular location is the cytoplasm. Its function is as follows. Required for the assembly and/or stability of the 40S ribosomal subunit. Required for the processing of the 20S rRNA-precursor to mature 18S rRNA in a late step of the maturation of 40S ribosomal subunits. This Enterocytozoon bieneusi (strain H348) (Microsporidian parasite) protein is Small ribosomal subunit protein uS2.